A 473-amino-acid polypeptide reads, in one-letter code: Glutamyl-tRNA reductase (473 aa).

Substrate is bound by residues 49 to 52, S109, 114 to 116, and Q120; these read TCNR and ESQ. The Nucleophile role is filled by C50. The disordered stretch occupies residues 196 to 215; sequence LDGGGVAAEGPRHAVTPEPP. 226-231 provides a ligand contact to NADP(+); that stretch reads GAGAVG.

It belongs to the glutamyl-tRNA reductase family. Homodimer.

It catalyses the reaction (S)-4-amino-5-oxopentanoate + tRNA(Glu) + NADP(+) = L-glutamyl-tRNA(Glu) + NADPH + H(+). It participates in porphyrin-containing compound metabolism; protoporphyrin-IX biosynthesis; 5-aminolevulinate from L-glutamyl-tRNA(Glu): step 1/2. In terms of biological role, catalyzes the NADPH-dependent reduction of glutamyl-tRNA(Glu) to glutamate 1-semialdehyde (GSA). The sequence is that of Glutamyl-tRNA reductase from Frankia casuarinae (strain DSM 45818 / CECT 9043 / HFP020203 / CcI3).